A 313-amino-acid chain; its full sequence is Pyrimidine-specific ribonucleoside hydrolase RihB (313 aa).

The active-site Proton acceptor is the Asp-11. Ca(2+) is bound by residues Asp-11, Asp-16, and Val-124. The substrate site is built by Gln-227 and His-239. Asp-240 provides a ligand contact to Ca(2+).

Belongs to the IUNH family. RihB subfamily. In terms of assembly, homotetramer. Ca(2+) is required as a cofactor.

The enzyme catalyses a pyrimidine ribonucleoside + H2O = a pyrimidine nucleobase + D-ribose. Hydrolyzes cytidine or uridine to ribose and cytosine or uracil, respectively. Has a clear preference for cytidine over uridine. Strictly specific for ribonucleosides. In Escherichia coli (strain SE11), this protein is Pyrimidine-specific ribonucleoside hydrolase RihB.